The chain runs to 294 residues: Cytidine deaminase (294 aa).

CMP/dCMP-type deaminase domains lie at 48-168 (DEDA…FGPK) and 186-294 (LEGD…VLLG). A substrate-binding site is contributed by 89 to 91 (NME). Position 102 (His102) interacts with Zn(2+). Residue Glu104 is the Proton donor of the active site. Residues Cys129 and Cys132 each coordinate Zn(2+).

Belongs to the cytidine and deoxycytidylate deaminase family. As to quaternary structure, homodimer. The cofactor is Zn(2+).

The enzyme catalyses cytidine + H2O + H(+) = uridine + NH4(+). It carries out the reaction 2'-deoxycytidine + H2O + H(+) = 2'-deoxyuridine + NH4(+). Functionally, this enzyme scavenges exogenous and endogenous cytidine and 2'-deoxycytidine for UMP synthesis. The protein is Cytidine deaminase of Citrobacter koseri (strain ATCC BAA-895 / CDC 4225-83 / SGSC4696).